A 274-amino-acid polypeptide reads, in one-letter code: NH(3)-dependent NAD(+) synthetase (274 aa).

An ATP-binding site is contributed by 46–53 (GISGGQDS). D52 contributes to the Mg(2+) binding site. Residue R140 coordinates deamido-NAD(+). ATP is bound at residue T160. Mg(2+) is bound at residue E165. Deamido-NAD(+) is bound by residues K173 and D180. Positions 189 and 211 each coordinate ATP. Residue 260 to 261 (HK) coordinates deamido-NAD(+).

It belongs to the NAD synthetase family. Homodimer.

It carries out the reaction deamido-NAD(+) + NH4(+) + ATP = AMP + diphosphate + NAD(+) + H(+). It functions in the pathway cofactor biosynthesis; NAD(+) biosynthesis; NAD(+) from deamido-NAD(+) (ammonia route): step 1/1. Catalyzes the ATP-dependent amidation of deamido-NAD to form NAD. Uses ammonia as a nitrogen source. The protein is NH(3)-dependent NAD(+) synthetase of Pectobacterium atrosepticum (strain SCRI 1043 / ATCC BAA-672) (Erwinia carotovora subsp. atroseptica).